The following is a 317-amino-acid chain: Long form salivary protein D7L2 (317 aa).

Residues 1–20 (MYKLLVALHLILCTVSHVKT) form the signal peptide. 5 cysteine pairs are disulfide-bonded: C39/C76, C72/C131, C181/C214, C195/C316, and C255/C266. Residues W58 and Y73 each coordinate thromboxane A2. Residues E182, Y264, D281, D284, and M308 each contribute to the serotonin site.

The protein belongs to the PBP/GOBP family. Female salivary gland.

The protein localises to the secreted. Its function is as follows. Modulates blood feeding of female mosquitoes on vertebrate species by binding and sequestering different mediators involved in the host response, such as biogenic amines and eicosanoids. Binds serotonin with high affinity. Binds tryptamine, octopamine, dopamine and noradrenaline with low affinity. Binds leukotriene C4, leukotriene D4, leukotriene E4 and U-46619, a stable analog of thromboxane A2. Does not bind leukotriene B4, adrenaline, histamine and ADP. Inhibits platelet aggregation induced by low concentrations of collagen and arachidonic acid but not by ADP or adrenaline. The chain is Long form salivary protein D7L2 from Anopheles darlingi (Mosquito).